Reading from the N-terminus, the 116-residue chain is Ribosome-binding factor A (116 aa).

It belongs to the RbfA family. As to quaternary structure, monomer. Binds 30S ribosomal subunits, but not 50S ribosomal subunits or 70S ribosomes.

It localises to the cytoplasm. One of several proteins that assist in the late maturation steps of the functional core of the 30S ribosomal subunit. Associates with free 30S ribosomal subunits (but not with 30S subunits that are part of 70S ribosomes or polysomes). Required for efficient processing of 16S rRNA. May interact with the 5'-terminal helix region of 16S rRNA. The polypeptide is Ribosome-binding factor A (Streptococcus sanguinis (strain SK36)).